A 938-amino-acid polypeptide reads, in one-letter code: Translation initiation factor IF-2 (938 aa).

A compositionally biased stretch (basic and acidic residues) spans 57–205 (DKSKKVASKE…PKSEETKSEE (149 aa)). Positions 57-350 (DKSKKVASKE…RSADDLAQQE (294 aa)) are disordered. The segment covering 206 to 215 (TTEGGESEEK) has biased composition (acidic residues). Over residues 248 to 259 (KKEEKKEDDKKD) the composition is skewed to basic and acidic residues. Composition is skewed to basic residues over residues 260 to 270 (KDRRKKRRRRI) and 285 to 296 (GAKKGGRTRSKP). Positions 297-319 (ITKEEPTEEEVQKQVRETLEKLQ) are enriched in basic and acidic residues. Residues 323–333 (SKGKGAKYRRQ) show a composition bias toward basic residues. Positions 334-344 (KRDEHRQRSAD) are enriched in basic and acidic residues. In terms of domain architecture, tr-type G spans 434–602 (TRAPIVTVMG…KVLLEAEILE (169 aa)). The tract at residues 443 to 450 (GHVDHGKT) is G1. 443–450 (GHVDHGKT) provides a ligand contact to GTP. Residues 468-472 (GITQH) form a G2 region. A G3 region spans residues 490–493 (DTPG). GTP-binding positions include 490–494 (DTPGH) and 544–547 (NKSD). Residues 544 to 547 (NKSD) are G4. The interval 580–582 (SAK) is G5.

The protein belongs to the TRAFAC class translation factor GTPase superfamily. Classic translation factor GTPase family. IF-2 subfamily.

The protein localises to the cytoplasm. Functionally, one of the essential components for the initiation of protein synthesis. Protects formylmethionyl-tRNA from spontaneous hydrolysis and promotes its binding to the 30S ribosomal subunits. Also involved in the hydrolysis of GTP during the formation of the 70S ribosomal complex. The sequence is that of Translation initiation factor IF-2 from Christiangramia forsetii (strain DSM 17595 / CGMCC 1.15422 / KT0803) (Gramella forsetii).